Here is a 297-residue protein sequence, read N- to C-terminus: Bifunctional protein FolD (297 aa).

NADP(+)-binding positions include G168–S170, T197, and V238.

The protein belongs to the tetrahydrofolate dehydrogenase/cyclohydrolase family. Homodimer.

It carries out the reaction (6R)-5,10-methylene-5,6,7,8-tetrahydrofolate + NADP(+) = (6R)-5,10-methenyltetrahydrofolate + NADPH. The enzyme catalyses (6R)-5,10-methenyltetrahydrofolate + H2O = (6R)-10-formyltetrahydrofolate + H(+). It participates in one-carbon metabolism; tetrahydrofolate interconversion. Catalyzes the oxidation of 5,10-methylenetetrahydrofolate to 5,10-methenyltetrahydrofolate and then the hydrolysis of 5,10-methenyltetrahydrofolate to 10-formyltetrahydrofolate. This chain is Bifunctional protein FolD, found in Lawsonia intracellularis (strain PHE/MN1-00).